A 236-amino-acid chain; its full sequence is Elastase-1 (236 aa).

The region spanning 1–236 is the Peptidase S1 domain; it reads VVGGRVAQPN…AYISWMNGIM (236 aa). Cysteines 30 and 46 form a disulfide. His-45 serves as the catalytic Charge relay system. Residues Glu-59, Asn-61, Thr-64, Glu-66, and Glu-69 each contribute to the Ca(2+) site. The active-site Charge relay system is Asp-93. Disulfide bonds link Cys-127–Cys-193, Cys-158–Cys-174, and Cys-183–Cys-213. The Charge relay system role is filled by Ser-187.

This sequence belongs to the peptidase S1 family. Elastase subfamily. Ca(2+) is required as a cofactor. In terms of tissue distribution, pancreas.

The protein localises to the secreted. It catalyses the reaction Hydrolysis of proteins, including elastin. Preferential cleavage: Ala-|-Xaa.. Acts upon elastin. This is Elastase-1 from Salmo salar (Atlantic salmon).